The chain runs to 4678 residues: E3 ubiquitin-protein ligase MYCBP2 (4678 aa).

Disordered regions lie at residues 87–127, 172–192, and 609–628; these read DRDQ…RSKS, SKNSVQSGESDSDEEEESKEP, and ASKGEDGESTKSRRQSKPYK. The span at 100 to 124 shows a compositional bias: basic residues; the sequence is SRNKKILNKKKLKRKQKSKSKVKTR. Ser-127, Ser-178, Ser-181, and Ser-183 each carry phosphoserine. RCC1 repeat units follow at residues 600 to 655, 699 to 755, 907 to 957, 958 to 1008, and 1010 to 1066; these read DGSI…VISK, NGEV…MMCP, KRDK…VLME, NGDV…VLLM, and GQVF…LRID. Basic residues predominate over residues 898–910; that stretch reads RSHPAQLKHKRDK. Residues 898–928 are disordered; it reads RSHPAQLKHKRDKHKDGSGERGEKDASKITT. A compositionally biased stretch (basic and acidic residues) spans 911–924; the sequence is HKDGSGERGEKDAS. Positions 1235–1386 are PHR domain 1; that stretch reads NRFESHGGGW…GQIPQLLYRL (152 aa). Ser-1624 carries the post-translational modification Phosphoserine. A PHR domain 2 region spans residues 1726-1884; that stretch reads NRFTKTSQGR…GQIPQILYYR (159 aa). An intrachain disulfide couples Cys-1748 to Cys-1863. 2 disordered regions span residues 1993–2012 and 2321–2340; these read FNPNQSTDSTTGNQPEQGLS and QQDQAKKPQRIPGSPAVTAA. The span at 1994–2012 shows a compositional bias: polar residues; that stretch reads NPNQSTDSTTGNQPEQGLS. The RAE1 binding stretch occupies residues 2022–2550; that stretch reads VIESEHPYKP…NQHLGKSLLV (529 aa). Residues 2341–2443 form a Filamin repeat; it reads SSNTDMTYGG…IDAGLEVKVK (103 aa). Thr-2683 carries the phosphothreonine modification. Disordered stretches follow at residues 2709 to 2931, 2943 to 2963, 2979 to 3020, and 3066 to 3085; these read LGNS…LHSE, TNSLTDSTCDDSSEFKSVDEG, EQEM…EPAK, and APIRSSLNSQQPTEEKETKL. Residues 2718–2733 are compositionally biased toward polar residues; the sequence is NISTSSKPASTSGKSE. Residues 2742–2760 are compositionally biased toward basic and acidic residues; the sequence is LKPDGRMSRTTADQKKPRG. Residue Ser-2769 is modified to Phosphoserine. The span at 2775–2785 shows a compositional bias: basic and acidic residues; it reads DAAKLRSDSHS. Positions 2786–2810 are enriched in polar residues; that stretch reads RSLSPNHNTLQTLKSDGRMPSSSRA. Ser-2787, Ser-2789, Ser-2833, Ser-2839, Ser-2869, Ser-2871, and Ser-2920 each carry phosphoserine. A compositionally biased stretch (low complexity) spans 2828 to 2843; that stretch reads PANRSSPSGASSPRSS. Residues 2860–2871 are compositionally biased toward basic and acidic residues; that stretch reads TKLDPPRERSKS. The residue at position 2985 (Ser-2985) is a Phosphoserine. Basic residues predominate over residues 2988–3001; that stretch reads ISRKCANRHTRPKK. Phosphoserine occurs at positions 3090, 3478, and 3505. The tract at residues 3605 to 3631 is disordered; it reads PVEPEEEEDEENKTSKENSEQEKDTRV. The span at 3616-3631 shows a compositional bias: basic and acidic residues; the sequence is NKTSKENSEQEKDTRV. Positions 3719–3897 constitute a DOC domain; that stretch reads SISIQSGFEA…VAQQRNCEAE (179 aa). Positions 3915–3934 are disordered; sequence SGDAEPTPEQEEKALLSSPE. Phosphothreonine is present on Thr-3921. Ser-3931 and Ser-3932 each carry phosphoserine. Residues Cys-4428, Cys-4431, Cys-4446, His-4448, His-4451, Cys-4454, Cys-4475, Cys-4478, Cys-4544, and Cys-4547 each coordinate Zn(2+). An RING-type; atypical zinc finger spans residues 4428-4479; sequence CMICFTEALSAAPAIQLDCSHIFHLQCCRRVLENRWLGPRITFGFISCPICK. The tract at residues 4539–4676 is tandem cysteine domain; it reads YAYYVCYKCR…LGCGVCRNAH (138 aa). Cys-4558 is an active-site residue. Positions 4575, 4578, 4587, 4590, 4599, 4602, and 4603 each coordinate Zn(2+). Cys-4610 is an active-site residue. Residues Cys-4617, Cys-4620, Cys-4638, Cys-4652, His-4658, Cys-4669, and Cys-4672 each contribute to the Zn(2+) site.

Belongs to the RING-Cys relay (RCR) family. Interacts with MYC. Interacts with TSC2 (tuberin) when TSC2 is in complex with TSC1 (hamartin). Interacts with FBXO45. Interacts with RAE1. Interacts with CPNE1 (via VWFA domain) and CPNE4 (via VWFA domain). Interacts with (sumoylated) RANGAP1; interaction with sumoylated RANGAP1 inhibits E3 ubiquitin-protein ligase activity and promotes MYCBP2 translocation to the nucleus. Interacts with RAN. Interacts with ATP13A2; the interaction inhibits the ubiquitination of TSC2 by MYCBP2. Interacts with USP11. Autoubiquitinated. In terms of tissue distribution, expressed in all tissues examined, expression is exceptionally abundant in brain and thymus. Colocalizes with TSC1 and TSC2 along the neurites and in the growth cones. Highly expressed in peripheral and central neurons. Colocalized with TSC1 in one of the filopodial extensions at the tip of a growth cone.

It localises to the nucleus. The protein localises to the cell projection. The protein resides in the axon. It is found in the cytoplasm. Its subcellular location is the cytoskeleton. It catalyses the reaction [E2 ubiquitin-conjugating enzyme]-S-ubiquitinyl-L-cysteine + [acceptor protein]-L-threonine = [E2 ubiquitin-conjugating enzyme]-L-cysteine + [acceptor protein]-3-O-ubiquitinyl-L-threonine.. It participates in protein modification; protein ubiquitination. Atypical E3 ubiquitin-protein ligase which specifically mediates ubiquitination of threonine and serine residues on target proteins, instead of ubiquitinating lysine residues. Shows esterification activity towards both threonine and serine, with a preference for threonine, and acts via two essential catalytic cysteine residues that relay ubiquitin to its substrate via thioester intermediates. Interacts with the E2 enzymes UBE2D1, UBE2D3, UBE2E1 and UBE2L3. Plays a key role in neural development, probably by mediating ubiquitination of threonine residues on target proteins. Involved in different processes such as regulation of neurite outgrowth, synaptic growth, synaptogenesis and axon degeneration. Required for the formation of major central nervous system axon tracts. Required for proper axon growth by regulating axon navigation and axon branching: acts by regulating the subcellular location and stability of MAP3K12/DLK. Required for proper localization of retinogeniculate projections but not for eye-specific segregation. Regulates axon guidance in the olfactory system. Involved in Wallerian axon degeneration, an evolutionarily conserved process that drives the loss of damaged axons: acts by promoting destabilization of NMNAT2, probably via ubiquitination of NMNAT2. Catalyzes ubiquitination of threonine and/or serine residues on NMNAT2, consequences of threonine and/or serine ubiquitination are however unknown. Regulates the internalization of TRPV1 in peripheral sensory neurons. Mediates ubiquitination and subsequent proteasomal degradation of TSC2/tuberin. Independently of the E3 ubiquitin-protein ligase activity, also acts as a guanosine exchange factor (GEF) for RAN in neurons of dorsal root ganglia. May function as a facilitator or regulator of transcriptional activation by MYC. Acts in concert with HUWE1 to regulate the circadian clock gene expression by promoting the lithium-induced ubiquination and degradation of NR1D1. The sequence is that of E3 ubiquitin-protein ligase MYCBP2 from Homo sapiens (Human).